We begin with the raw amino-acid sequence, 1954 residues long: Integrin beta-like protein C (1954 aa).

Residues 1–20 (MNKLFYLFILIASLFILTDA) form the signal peptide. The Extracellular segment spans residues 21 to 1883 (SHFRFGTISW…TTTQTNDNKT (1863 aa)). Residues asparagine 138 and asparagine 354 are each glycosylated (N-linked (GlcNAc...) asparagine). One can recognise an EGF-like domain in the interval 428–465 (YGENCVAVPPCVNGVPNSGINGDGKCLCSNGWTGADCS). 2 disulfides stabilise this stretch: cysteine 438–cysteine 453 and cysteine 455–cysteine 464. Asparagine 479 is a glycosylation site (N-linked (GlcNAc...) asparagine). Positions 521–706 (DVYVLVDANL…TGVKNVLSKI (186 aa)) constitute a VWFA domain. 9 N-linked (GlcNAc...) asparagine glycosylation sites follow: asparagine 1348, asparagine 1382, asparagine 1628, asparagine 1678, asparagine 1742, asparagine 1770, asparagine 1820, asparagine 1860, and asparagine 1881. Residues 1884–1904 (VLTGAIAGAAAGTALIAAAAW) form a helical membrane-spanning segment. Topologically, residues 1905–1954 (RLLRKAAPPTDTFFSEAAFLGDGVSSNPLYEQSASAAENPLYQSASDTTD) are cytoplasmic.

This sequence belongs to the SIB family. As to quaternary structure, interacts with talA/talin.

It localises to the membrane. In terms of biological role, implicated in cellular adhesion. In Dictyostelium discoideum (Social amoeba), this protein is Integrin beta-like protein C (sibC).